The primary structure comprises 206 residues: Large ribosomal subunit protein uL4 (206 aa).

The tract at residues asparagine 47 to glutamate 94 is disordered. The segment covering serine 59–glycine 70 has biased composition (basic residues).

The protein belongs to the universal ribosomal protein uL4 family. In terms of assembly, part of the 50S ribosomal subunit.

In terms of biological role, one of the primary rRNA binding proteins, this protein initially binds near the 5'-end of the 23S rRNA. It is important during the early stages of 50S assembly. It makes multiple contacts with different domains of the 23S rRNA in the assembled 50S subunit and ribosome. Forms part of the polypeptide exit tunnel. The sequence is that of Large ribosomal subunit protein uL4 from Aromatoleum aromaticum (strain DSM 19018 / LMG 30748 / EbN1) (Azoarcus sp. (strain EbN1)).